Here is an 898-residue protein sequence, read N- to C-terminus: Magnesium-transporting ATPase, P-type 1 (898 aa).

The Cytoplasmic portion of the chain corresponds to 1–94 (MFKEIFTRLI…QPSPWWVHLW (94 aa)). Residues 95–115 (VCYRNPFNILLTILGAISYAT) form a helical membrane-spanning segment. Residue E116 is a topological domain, extracellular. A helical membrane pass occupies residues 117–137 (DLFAAGVIALMVAISTLLNFI). Residues 138–287 (QEARSTKAAD…PNAFQQGISR (150 aa)) are Cytoplasmic-facing. A helical membrane pass occupies residues 288-308 (VSMLLIRFMLVMAPVVLLING). Over 309 to 317 (YTKGDWWEA) the chain is Extracellular. The helical transmembrane segment at 318-335 (ALFALSVAVGLTPEMLPM) threads the bilayer. E331 contacts Mg(2+). At 336–695 (IVTSTLARGA…IEGRRTFANM (360 aa)) the chain is on the cytoplasmic side. The active-site 4-aspartylphosphate intermediate is the D373. 3 residues coordinate Mg(2+): D641, D645, and N709. Residues 696-715 (LKYIKMTASSNFGNVFSVLV) form a helical membrane-spanning segment. Residues 716-724 (ASAFLPFLP) lie on the Extracellular side of the membrane. The helical transmembrane segment at 725-744 (MLPLHLLIQNLLYDVSQVAI) threads the bilayer. Mg(2+)-binding residues include N734 and D738. Topologically, residues 745 to 766 (PFDNVDDEQIQKPQRWNPADLG) are cytoplasmic. A helical transmembrane segment spans residues 767–790 (RFMIFFGPISSIFDILTFCLMWWV). At 791–799 (FHANTPETQ) the chain is on the extracellular side. The chain crosses the membrane as a helical span at residues 800-818 (TLFQSGWFVVGLLSQTLIV). The Cytoplasmic portion of the chain corresponds to 819 to 831 (HMIRTRRVPFIQS). A helical membrane pass occupies residues 832 to 851 (CASWPLMIMTVIVMIVGIAL). The Extracellular segment spans residues 852 to 866 (PFSPLASYLQLQALP). The chain crosses the membrane as a helical span at residues 867-886 (LSYFPWLVAILAGYMTLTQL). Over 887–898 (VKGFYSRRYGWQ) the chain is Cytoplasmic.

Belongs to the cation transport ATPase (P-type) (TC 3.A.3) family. Type IIIB subfamily.

It localises to the cell inner membrane. The catalysed reaction is Mg(2+)(out) + ATP + H2O = Mg(2+)(in) + ADP + phosphate + H(+). Its function is as follows. Mediates magnesium influx to the cytosol. The chain is Magnesium-transporting ATPase, P-type 1 (mgtA) from Escherichia coli O157:H7.